Reading from the N-terminus, the 349-residue chain is N-acetyltaurine hydrolase (349 aa).

A divalent metal cation is bound by residues histidine 26, histidine 28, glutamate 169, histidine 201, histidine 230, and aspartate 298.

Belongs to the metallo-dependent hydrolases superfamily. Phosphotriesterase family. A divalent metal cation is required as a cofactor.

The protein resides in the cytoplasm. It localises to the cytosol. The enzyme catalyses N-acetyltaurine + H2O = taurine + acetate. It carries out the reaction N-propanoyltaurine + H2O = propanoate + taurine. The catalysed reaction is N-acetyl-L-methionine + H2O = L-methionine + acetate. It catalyses the reaction N-acetyl-L-isoleucine + H2O = L-isoleucine + acetate. The enzyme catalyses N-acetyl-L-leucine + H2O = L-leucine + acetate. It carries out the reaction N-acetyl-L-valine + H2O = L-valine + acetate. In terms of biological role, N-acetyltaurine hydrolase that regulates feeding by catalyzing the hydrolysis of N-acetyltaurine into taurine and acetate. N-acetyltaurine has anorexigenic and anti-obesity effects that are dependent on GFRAL receptor and GDF15. PTER also acts on other N-acetyl amino acids (Met, Ile, Leu, Val) and N-propionyltaurine, but at lower rates. This chain is N-acetyltaurine hydrolase (PTER), found in Bos taurus (Bovine).